Here is a 51-residue protein sequence, read N- to C-terminus: Small ribosomal subunit protein uS14 (51 aa).

The Zn(2+) site is built by cysteine 16, cysteine 19, cysteine 34, and cysteine 37.

It belongs to the universal ribosomal protein uS14 family. Zinc-binding uS14 subfamily. As to quaternary structure, part of the 30S ribosomal subunit. Zn(2+) is required as a cofactor.

Binds 16S rRNA, required for the assembly of 30S particles. The protein is Small ribosomal subunit protein uS14 of Archaeoglobus fulgidus (strain ATCC 49558 / DSM 4304 / JCM 9628 / NBRC 100126 / VC-16).